The sequence spans 117 residues: Basic phospholipase A2 pseudexin B chain (117 aa).

7 disulfides stabilise this stretch: C11–C71, C27–C117, C29–C45, C44–C98, C51–C91, C60–C84, and C78–C89. Ca(2+)-binding residues include Y28, G30, and G32. H48 is an active-site residue. D49 provides a ligand contact to Ca(2+). The active site involves D92.

It belongs to the phospholipase A2 family. Group I subfamily. D49 sub-subfamily. The cofactor is Ca(2+). As to expression, expressed by the venom gland.

Its subcellular location is the secreted. It catalyses the reaction a 1,2-diacyl-sn-glycero-3-phosphocholine + H2O = a 1-acyl-sn-glycero-3-phosphocholine + a fatty acid + H(+). Functionally, PLA2 catalyzes the calcium-dependent hydrolysis of the 2-acyl groups in 3-sn-phosphoglycerides. The protein is Basic phospholipase A2 pseudexin B chain of Pseudechis porphyriacus (Red-bellied black snake).